The sequence spans 446 residues: Glutamate-1-semialdehyde 2,1-aminomutase (446 aa).

Position 263 is an N6-(pyridoxal phosphate)lysine (Lys263).

Belongs to the class-III pyridoxal-phosphate-dependent aminotransferase family. HemL subfamily. Pyridoxal 5'-phosphate serves as cofactor.

Its subcellular location is the cytoplasm. The catalysed reaction is (S)-4-amino-5-oxopentanoate = 5-aminolevulinate. The protein operates within porphyrin-containing compound metabolism; protoporphyrin-IX biosynthesis; 5-aminolevulinate from L-glutamyl-tRNA(Glu): step 2/2. The chain is Glutamate-1-semialdehyde 2,1-aminomutase from Haloquadratum walsbyi (strain DSM 16790 / HBSQ001).